The following is a 313-amino-acid chain: E3 ubiquitin-protein ligase SINA-like 2 (313 aa).

The interval 1-26 (MSGEASTSRRKRQRVPSSVESVENGG) is disordered. The RING-type zinc finger occupies 44-80 (CPICCHALTSPIFQCDNGHIACSSCCTKLRNKCPSCA). The tract at residues 94–277 (VVEAVMVTCP…LKMEICIRKL (184 aa)) is SBD. Residues 97–155 (AVMVTCPNVKHGCTEKFSYGKELIHEKDCRFALCYCPAPNCNYSGVYKDLYSHFYVNHY) form an SIAH-type zinc finger. Zn(2+) is bound by residues Cys-102, Cys-109, His-121, Cys-125, Cys-132, Cys-137, His-149, and His-154. Residues 278–313 (KKDEEEADEDEESEEEEDDDDDDDDDDEEEDADEEE) are disordered. Residues 282–313 (EEADEDEESEEEEDDDDDDDDDDEEEDADEEE) show a composition bias toward acidic residues.

The protein belongs to the SINA (Seven in absentia) family.

The catalysed reaction is S-ubiquitinyl-[E2 ubiquitin-conjugating enzyme]-L-cysteine + [acceptor protein]-L-lysine = [E2 ubiquitin-conjugating enzyme]-L-cysteine + N(6)-ubiquitinyl-[acceptor protein]-L-lysine.. It functions in the pathway protein modification; protein ubiquitination. Functionally, E3 ubiquitin-protein ligase that mediates ubiquitination and subsequent proteasomal degradation of target proteins. E3 ubiquitin ligases accept ubiquitin from an E2 ubiquitin-conjugating enzyme in the form of a thioester and then directly transfers the ubiquitin to targeted substrates. It probably triggers the ubiquitin-mediated degradation of different substrates. This is E3 ubiquitin-protein ligase SINA-like 2 from Arabidopsis thaliana (Mouse-ear cress).